Reading from the N-terminus, the 346-residue chain is Probable disease resistance protein At5g45440 (346 aa).

One can recognise an NB-ARC domain in the interval 38-116 (KQVEDRVETD…AYAPRIWVSM (79 aa)). 85-92 (GEYGVGKT) serves as a coordination point for ATP. The segment at 315–346 (FDDGKANQNGSKDGKTDSVDNPNSEESKTKPL) is disordered.

In terms of biological role, possible disease resistance protein. The chain is Probable disease resistance protein At5g45440 from Arabidopsis thaliana (Mouse-ear cress).